Reading from the N-terminus, the 146-residue chain is Snaclec stejaggregin-B subunit beta-1 (146 aa).

The signal sequence occupies residues 1 to 23 (MGRFIFVSFGLLVVFLSLSGTGA). Disulfide bonds link cysteine 25–cysteine 36, cysteine 53–cysteine 142, and cysteine 119–cysteine 134. The C-type lectin domain maps to 32–143 (YDLYCYRVFQ…CSQTYPFVCK (112 aa)).

The protein belongs to the snaclec family. Heteromultimer; disulfide-linked. As to expression, expressed by the venom gland.

It localises to the secreted. In terms of biological role, interferes with one step of hemostasis (modulation of platelet aggregation, or coagulation cascade, for example). The protein is Snaclec stejaggregin-B subunit beta-1 of Trimeresurus stejnegeri (Chinese green tree viper).